Consider the following 871-residue polypeptide: Metabotropic glutamate receptor 6 (871 aa).

The first 23 residues, 1–23 (MGRLRVLLLWLAWWLSQAGIAHG), serve as a signal peptide directing secretion. The Extracellular portion of the chain corresponds to 24-579 (AGSVRLAGGL…VVRLTWSSPW (556 aa)). Residues C51 and C93 are joined by a disulfide bond. L-glutamate-binding positions include S148, 169–171 (AST), and Y219. 7 disulfides stabilise this stretch: C238–C530, C361–C377, C417–C424, C512–C531, C516–C534, C537–C549, and C552–C565. An N-linked (GlcNAc...) asparagine glycan is attached at N290. Position 301 (D301) interacts with L-glutamate. K394 provides a ligand contact to L-glutamate. N-linked (GlcNAc...) asparagine glycosylation is found at N445 and N473. N561 carries N-linked (GlcNAc...) asparagine glycosylation. A helical membrane pass occupies residues 580-602 (AALPLLLAVLGIMATTTIIATFM). Topologically, residues 603 to 616 (RHNDTPIVRASGRE) are cytoplasmic. A helical membrane pass occupies residues 617 to 637 (LSYVLLTGIFLIYAITFLMVA). At 638–648 (EPCAAVCASRR) the chain is on the extracellular side. A helical membrane pass occupies residues 649 to 667 (LLLGLGTTLSYSALLTKTN). The Cytoplasmic segment spans residues 668 to 691 (RIYRIFEQGKRSVTPPPFISPTSQ). A helical membrane pass occupies residues 692 to 712 (LVITFGLTSLQVVGVIAWLGA). The Extracellular portion of the chain corresponds to 713-742 (QPPHSVIDYEEQRTVDPEQARGVLKCDMSD). A helical membrane pass occupies residues 743–764 (LSLIGCLGYSLLLMVTCTVYAI). The Cytoplasmic segment spans residues 765–777 (KARGVPETFNEAK). The chain crosses the membrane as a helical span at residues 778–800 (PIGFTMYTTCIIWLAFVPIFFGT). Residues 801–813 (AQSAEKIYIQTTT) lie on the Extracellular side of the membrane. A helical membrane pass occupies residues 814–839 (LTVSLSLSASVSLGMLYVPKTYVILF). At 840–871 (HPEQNVQKRKRSLKKTSTMAAPPKSENSEDAK) the chain is on the cytoplasmic side. Residues 848–871 (RKRSLKKTSTMAAPPKSENSEDAK) form a disordered region.

Belongs to the G-protein coupled receptor 3 family. In terms of assembly, homodimer. Interacts with GPR179. Interacts with photoreceptor synaptic protein LRIT1 (via its N-terminal extracellular domain). In terms of tissue distribution, detected in the outer plexiform layer in retina (at protein level).

The protein localises to the cell membrane. The protein resides in the endoplasmic reticulum membrane. It localises to the golgi apparatus membrane. Its subcellular location is the cell projection. It is found in the dendrite. G-protein coupled receptor for glutamate. Ligand binding causes a conformation change that triggers signaling via guanine nucleotide-binding proteins (G proteins) and modulates the activity of down-stream effectors, such as adenylate cyclase. Signaling inhibits adenylate cyclase activity. Signaling stimulates TRPM1 channel activity and Ca(2+) uptake. Required for normal vision. This Mus musculus (Mouse) protein is Metabotropic glutamate receptor 6 (Grm6).